The chain runs to 319 residues: Biotin synthase (319 aa).

Residues 44–273 (IHGDGIDLCS…EAKIRLAGGR (230 aa)) form the Radical SAM core domain. [4Fe-4S] cluster-binding residues include C62, C66, and C69. Residues S106, C138, C198, and R268 each contribute to the [2Fe-2S] cluster site.

Belongs to the radical SAM superfamily. Biotin synthase family. Homodimer. [4Fe-4S] cluster serves as cofactor. The cofactor is [2Fe-2S] cluster.

The enzyme catalyses (4R,5S)-dethiobiotin + (sulfur carrier)-SH + 2 reduced [2Fe-2S]-[ferredoxin] + 2 S-adenosyl-L-methionine = (sulfur carrier)-H + biotin + 2 5'-deoxyadenosine + 2 L-methionine + 2 oxidized [2Fe-2S]-[ferredoxin]. It participates in cofactor biosynthesis; biotin biosynthesis; biotin from 7,8-diaminononanoate: step 2/2. Catalyzes the conversion of dethiobiotin (DTB) to biotin by the insertion of a sulfur atom into dethiobiotin via a radical-based mechanism. The sequence is that of Biotin synthase from Clostridium perfringens (strain ATCC 13124 / DSM 756 / JCM 1290 / NCIMB 6125 / NCTC 8237 / Type A).